The sequence spans 364 residues: Caffeic acid 3-O-methyltransferase (364 aa).

Substrate is bound at residue 131-137 (MNQDKVL). The substrate binding stretch occupies residues 163 to 181 (AFEYHGTDSRFNRVFNEGM). S-adenosyl-L-methionine is bound by residues G209, D232, D252, M253, and K266. The active-site Proton acceptor is H270.

The protein belongs to the class I-like SAM-binding methyltransferase superfamily. Cation-independent O-methyltransferase family. COMT subfamily. As to quaternary structure, homodimer. Confined to the vascular tissues of organs undergoing lignification such as stems and roots.

The catalysed reaction is (E)-caffeate + S-adenosyl-L-methionine = (E)-ferulate + S-adenosyl-L-homocysteine + H(+). The enzyme catalyses tricetin + 2 S-adenosyl-L-methionine = 3',5'-di-O-methyltricetin + 2 S-adenosyl-L-homocysteine + 2 H(+). It catalyses the reaction luteolin + S-adenosyl-L-methionine = chrysoeriol + S-adenosyl-L-homocysteine + H(+). It carries out the reaction tricetin + S-adenosyl-L-methionine = 3'-O-methyltricetin + S-adenosyl-L-homocysteine + H(+). The protein operates within aromatic compound metabolism; phenylpropanoid biosynthesis. In terms of biological role, catalyzes the conversion of caffeic acid to ferulic acid and of 5-hydroxyferulic acid to sinapic acid. The resulting products may subsequently be converted to the corresponding alcohols that are incorporated into lignins. Can use the flavone tricetin (5,7,3',4',5'-pentahydroxyflavone) as the preferred substrate and give rise to its 3',5'-dimethyl derivative, tricin (3',5'-dimethoxy-5,7,4'-trihydroxyflavone), as the major product, and selgin to a lower extent. Tricin exhibits potential benefits for human health including relaxant effect on smooth muscle of intestinal tissues, antioxidant effect, antihistaminic activity, and growth inhibition of human malignant breast tumor cells and colon cancer cells. Can also use luteolin, quercetin and 5-hydroxyferulic acid (5HF) as substrates. This chain is Caffeic acid 3-O-methyltransferase, found in Zea mays (Maize).